The sequence spans 338 residues: Methionine import ATP-binding protein MetN 1 (338 aa).

The 240-residue stretch at 2-241 folds into the ABC transporter domain; it reads IELHQVSKSF…AKHATTKRFV (240 aa). ATP is bound at residue 38-45; it reads GYSGAGKS.

Belongs to the ABC transporter superfamily. Methionine importer (TC 3.A.1.24) family. In terms of assembly, the complex is composed of two ATP-binding proteins (MetN), two transmembrane proteins (MetI) and a solute-binding protein (MetQ).

It localises to the cell membrane. It carries out the reaction L-methionine(out) + ATP + H2O = L-methionine(in) + ADP + phosphate + H(+). The catalysed reaction is D-methionine(out) + ATP + H2O = D-methionine(in) + ADP + phosphate + H(+). Functionally, part of the ABC transporter complex MetNIQ involved in methionine import. Responsible for energy coupling to the transport system. The polypeptide is Methionine import ATP-binding protein MetN 1 (Listeria monocytogenes serovar 1/2a (strain ATCC BAA-679 / EGD-e)).